A 1538-amino-acid chain; its full sequence is Ferredoxin-dependent glutamate synthase (1538 aa).

Cys34 functions as the For GATase activity in the catalytic mechanism. The Glutamine amidotransferase type-2 domain occupies 34–431; the sequence is CGVGFIADVN…PGQMISVDIF (398 aa). Residue 1109-1166 participates in FMN binding; it reads LSEVHQLLAENQLRDRVTLRVDGGLRTGSDIVLAAIMGAEEFGFGTVAMIATGCIMAR. 3 residues coordinate [3Fe-4S] cluster: Cys1162, Cys1168, and Cys1173.

It belongs to the glutamate synthase family. Monomer. It depends on [3Fe-4S] cluster as a cofactor. Requires FAD as cofactor. FMN is required as a cofactor.

The protein localises to the plastid. It is found in the chloroplast stroma. It carries out the reaction 2 oxidized [2Fe-2S]-[ferredoxin] + 2 L-glutamate = L-glutamine + 2 reduced [2Fe-2S]-[ferredoxin] + 2-oxoglutarate + 2 H(+). It participates in amino-acid biosynthesis; L-glutamate biosynthesis via GLT pathway; L-glutamate from 2-oxoglutarate and L-glutamine (ferredoxin route): step 1/1. The protein operates within energy metabolism; nitrogen metabolism. This Pyropia yezoensis (Susabi-nori) protein is Ferredoxin-dependent glutamate synthase (gltB).